A 148-amino-acid chain; its full sequence is uncharacterized protein (148 aa).

One can recognise an HTH asnC-type domain in the interval 4 to 65; the sequence is MDKVDLQLIK…IPNLEKLNYM (62 aa). The segment at residues 23–42 is a DNA-binding region (H-T-H motif); that stretch reads YRELAEMLGTTRQRVARKVD.

This is an uncharacterized protein from Pyrococcus furiosus (strain ATCC 43587 / DSM 3638 / JCM 8422 / Vc1).